The chain runs to 93 residues: Large ribosomal subunit protein uL23 (93 aa).

Belongs to the universal ribosomal protein uL23 family. Part of the 50S ribosomal subunit. Contacts protein L29, and trigger factor when it is bound to the ribosome.

One of the early assembly proteins it binds 23S rRNA. One of the proteins that surrounds the polypeptide exit tunnel on the outside of the ribosome. Forms the main docking site for trigger factor binding to the ribosome. This chain is Large ribosomal subunit protein uL23, found in Campylobacter hominis (strain ATCC BAA-381 / DSM 21671 / CCUG 45161 / LMG 19568 / NCTC 13146 / CH001A).